We begin with the raw amino-acid sequence, 343 residues long: tRNA N6-adenosine threonylcarbamoyltransferase (343 aa).

Positions 111 and 115 each coordinate Fe cation. Substrate is bound by residues 135–139 (VLSGG), aspartate 168, glycine 181, and asparagine 280. Fe cation is bound at residue aspartate 306.

It belongs to the KAE1 / TsaD family. It depends on Fe(2+) as a cofactor.

The protein localises to the cytoplasm. The enzyme catalyses L-threonylcarbamoyladenylate + adenosine(37) in tRNA = N(6)-L-threonylcarbamoyladenosine(37) in tRNA + AMP + H(+). Its function is as follows. Required for the formation of a threonylcarbamoyl group on adenosine at position 37 (t(6)A37) in tRNAs that read codons beginning with adenine. Is involved in the transfer of the threonylcarbamoyl moiety of threonylcarbamoyl-AMP (TC-AMP) to the N6 group of A37, together with TsaE and TsaB. TsaD likely plays a direct catalytic role in this reaction. This Protochlamydia amoebophila (strain UWE25) protein is tRNA N6-adenosine threonylcarbamoyltransferase.